A 772-amino-acid chain; its full sequence is Glucocorticoid receptor (772 aa).

Positions 1-15 are enriched in basic and acidic residues; sequence MDSKESLSPPGREEV. The disordered stretch occupies residues 1–22; that stretch reads MDSKESLSPPGREEVPSSVLRP. The interval 1-415 is modulating; that stretch reads MDSKESLSPP…TTAAGPPPKL (415 aa). R25 is subject to Omega-N-methylarginine. The interval 39 to 82 is disordered; sequence APVRVPASSPSLAPAAQPDSKQQRLAVDFPKGSASNAQQPDLSR. A compositionally biased stretch (low complexity) spans 44–58; the sequence is PASSPSLAPAAQPDS. Phosphoserine occurs at positions 47, 115, 136, and 143. Residues 132–186 are disordered; the sequence is NRSASGADNPRSTAPAAGSAAPTEGFPKTHSDLASERQNPKGQTGGSAGSAKLHP. The span at 143–156 shows a compositional bias: low complexity; the sequence is STAPAAGSAAPTEG. Residues 158-170 are compositionally biased toward basic and acidic residues; that stretch reads PKTHSDLASERQN. 3 positions are modified to phosphoserine: S203, S211, and S226. K258 is covalently cross-linked (Glycyl lysine isopeptide (Lys-Gly) (interchain with G-Cter in SUMO2)). Glycyl lysine isopeptide (Lys-Gly) (interchain with G-Cter in SUMO); alternate cross-links involve residues K277 and K293. Residues K277 and K293 each participate in a glycyl lysine isopeptide (Lys-Gly) (interchain with G-Cter in SUMO2); alternate cross-link. Residues S307 and S400 each carry the phosphoserine modification. A Glycyl lysine isopeptide (Lys-Gly) (interchain with G-Cter in ubiquitin) cross-link involves residue K414. 2 consecutive NR C4-type zinc fingers follow at residues 416 to 436 and 452 to 476; these read CLVC…CGSC and CAGR…YRKC. The segment at residues 416–481 is a DNA-binding region (nuclear receptor); it reads CLVCSDEASG…RYRKCLQAGM (66 aa). 4 positions are modified to N6-acetyllysine: K475, K487, K489, and K490. The interval 480–772 is interaction with CLOCK; sequence GMNLEARKTK…NIKKLLFHQK (293 aa). Residues 482–518 form a hinge region; sequence NLEARKTKKKIKGIQQTSTGVSQETSENPSNRTVVPA. The interval 494–513 is disordered; it reads GIQQTSTGVSQETSENPSNR. A compositionally biased stretch (polar residues) spans 499-513; the sequence is STGVSQETSENPSNR. The region spanning 519–753 is the NR LBD domain; it reads ALPQLTPTLV…FPEMLAEIIT (235 aa). The interval 527 to 692 is interaction with CRY1; it reads LVSLLEVIEP…EIRMTYIKEL (166 aa). Residue K698 forms a Glycyl lysine isopeptide (Lys-Gly) (interchain with G-Cter in SUMO) linkage.

Belongs to the nuclear hormone receptor family. NR3 subfamily. Heteromultimeric cytoplasmic complex with HSP90AA1, HSPA1A/HSPA1B, and FKBP5 or another immunophilin such as PPID, STIP1, or the immunophilin homolog PPP5C. Upon ligand binding FKBP5 dissociates from the complex and FKBP4 takes its place, thereby linking the complex to dynein and mediating transport to the nucleus, where the complex dissociates. Probably forms a complex composed of chaperones HSP90 and HSP70, co-chaperones CDC37, PPP5C, TSC1 and client protein TSC2, CDK4, AKT, RAF1 and NR3C1; this complex does not contain co-chaperones STIP1/HOP and PTGES3/p23. Directly interacts with UNC45A. Binds to DNA as a homodimer, and as heterodimer with NR3C2 or the retinoid X receptor. Binds STAT5A and STAT5B homodimers and heterodimers. Interacts with NRIP1, POU2F1, POU2F2 and TRIM28. Interacts with several coactivator complexes, including the SMARCA4 complex, CREBBP/EP300, TADA2L (Ada complex) and p160 coactivators such as NCOA2 and NCOA6. Interaction with BAG1 inhibits transactivation. Interacts with HEXIM1 and TGFB1I1. Interacts with NCOA1. Interacts with NCOA3, SMARCA4, SMARCC1, SMARCD1, and SMARCE1. Interacts with CLOCK, CRY1 and CRY2 in a ligand-dependent fashion. Interacts with CIART. Interacts with RWDD3. Interacts with UBE2I/UBC9 and this interaction is enhanced in the presence of RWDD3. Interacts with GRIP1. Interacts with NR4A3 (via nuclear receptor DNA-binding domain), represses transcription activity of NR4A3 on the POMC promoter Nur response element (NurRE). Directly interacts with PNRC2 to attract and form a complex with UPF1 and DCP1A; the interaction leads to rapid mRNA degradation. Interacts with GSK3B. Interacts with FNIP1 and FNIP2. Interacts (via C-terminus) with HNRNPU (via C-terminus). Interacts with MCM3AP. Interacts (via domain NR LBD) with HSP90AA1 and HSP90AB1. In the absence of hormonal ligand, interacts with TACC1. Interacts (via NR LBD domain) with ZNF764 (via KRAB domain); the interaction regulates transcription factor activity of NR3C1 by directing its actions toward certain biologic pathways. Acetylation by CLOCK reduces its binding to glucocorticoid response elements and its transcriptional activity. Post-translationally, increased proteasome-mediated degradation in response to glucocorticoids. In terms of processing, phosphorylated in the absence of hormone; becomes hyperphosphorylated in the presence of glucocorticoid. The Ser-203, Ser-226 and Ser-399-phosphorylated forms are mainly cytoplasmic, and the Ser-211-phosphorylated form is nuclear. Phosphorylation at Ser-211 increases transcriptional activity. Phosphorylation at Ser-203, Ser-226 and Ser-399 decreases signaling capacity. Phosphorylation at Ser-399 may protect from glucocorticoid-induced apoptosis. Phosphorylation at Ser-203 and Ser-211 is not required in regulation of chromosome segregation. May be dephosphorylated by PPP5C, attenuates NR3C1 action. Ubiquitinated by UBR5, leading to its degradation: UBR5 specifically recognizes and binds ligand-bound NR3C1 when it is not associated with coactivators (NCOAs). In presence of NCOAs, the UBR5-degron is not accessible, preventing its ubiquitination and degradation. Post-translationally, sumoylation at Lys-277 and Lys-293 negatively regulates its transcriptional activity. Sumoylation at Lys-698 positively regulates its transcriptional activity in the presence of RWDD3. Sumoylation at Lys-277 and Lys-293 is dispensable whereas sumoylation at Lys-698 is critical for the stimulatory effect of RWDD3 on its transcriptional activity. Heat shock increases sumoylation in a RWDD3-dependent manner.

It localises to the cytoplasm. Its subcellular location is the nucleus. It is found in the mitochondrion. The protein resides in the cytoskeleton. The protein localises to the spindle. It localises to the microtubule organizing center. Its subcellular location is the centrosome. It is found in the chromosome. The protein resides in the nucleoplasm. Functionally, receptor for glucocorticoids (GC). Has a dual mode of action: as a transcription factor that binds to glucocorticoid response elements (GRE), both for nuclear and mitochondrial DNA, and as a modulator of other transcription factors. Affects inflammatory responses, cellular proliferation and differentiation in target tissues. Involved in chromatin remodeling. Plays a role in rapid mRNA degradation by binding to the 5' UTR of target mRNAs and interacting with PNRC2 in a ligand-dependent manner which recruits the RNA helicase UPF1 and the mRNA-decapping enzyme DCP1A, leading to RNA decay. Could act as a coactivator for STAT5-dependent transcription upon growth hormone (GH) stimulation and could reveal an essential role of hepatic GR in the control of body growth. Mediates glucocorticoid-induced apoptosis. Promotes accurate chromosome segregation during mitosis. May act as a tumor suppressor. May play a negative role in adipogenesis through the regulation of lipolytic and antilipogenic gene expression. This chain is Glucocorticoid receptor (NR3C1), found in Oryctolagus cuniculus (Rabbit).